The sequence spans 1241 residues: ATP-dependent helicase/nuclease subunit A (1241 aa).

A UvrD-like helicase ATP-binding domain is found at 12–485; that stretch reads SQWTDDQWKA…IDLAKNFRSR (474 aa). 33–40 provides a ligand contact to ATP; sequence AAAGSGKT. Residues 505 to 805 enclose the UvrD-like helicase C-terminal domain; the sequence is GEIDYDADAE…RIMTIHKSKG (301 aa).

It belongs to the helicase family. AddA subfamily. As to quaternary structure, heterodimer of AddA and AddB/RexB. It depends on Mg(2+) as a cofactor.

It carries out the reaction Couples ATP hydrolysis with the unwinding of duplex DNA by translocating in the 3'-5' direction.. It catalyses the reaction ATP + H2O = ADP + phosphate + H(+). Its function is as follows. The heterodimer acts as both an ATP-dependent DNA helicase and an ATP-dependent, dual-direction single-stranded exonuclease. Recognizes the chi site generating a DNA molecule suitable for the initiation of homologous recombination. The AddA nuclease domain is required for chi fragment generation; this subunit has the helicase and 3' -&gt; 5' nuclease activities. In Bacillus cereus (strain Q1), this protein is ATP-dependent helicase/nuclease subunit A.